Reading from the N-terminus, the 33-residue chain is Tail virion protein G9P (33 aa).

The helical transmembrane segment at 5 to 25 (VGSFLGAYFLGFALFYGIGFF) threads the bilayer.

Belongs to the inovirus G9P protein family.

It localises to the virion. Its subcellular location is the host membrane. May initiate with G7P the virion concomitant assembly-budding process, by interacting with the packaging signal of the viral genome. The assembly-budding takes place at the host inner membrane. In turn, G7P and G9P are present at the end of the filamentous virion that emerges first from the bacterial host. The chain is Tail virion protein G9P (IX) from Salmonella phage IKe (Bacteriophage IKe).